A 508-amino-acid polypeptide reads, in one-letter code: Probable cytochrome P450 6d5 (508 aa).

C453 contributes to the heme binding site.

It belongs to the cytochrome P450 family. Heme is required as a cofactor.

Its subcellular location is the endoplasmic reticulum membrane. It localises to the microsome membrane. In terms of biological role, may be involved in the metabolism of insect hormones and in the breakdown of synthetic insecticides. In Drosophila melanogaster (Fruit fly), this protein is Probable cytochrome P450 6d5 (Cyp6d5).